Here is a 65-residue protein sequence, read N- to C-terminus: Large ribosomal subunit protein uL30 (65 aa).

Belongs to the universal ribosomal protein uL30 family. Part of the 50S ribosomal subunit.

The sequence is that of Large ribosomal subunit protein uL30 from Rickettsia bellii (strain OSU 85-389).